The chain runs to 172 residues: Shikimate kinase (172 aa).

An ATP-binding site is contributed by 14-19; the sequence is GAGKST. Residue Ser-18 participates in Mg(2+) binding. Asp-36, Arg-60, and Gly-82 together coordinate substrate. ATP is bound at residue Arg-120. Position 139 (Arg-139) interacts with substrate. Residue Gln-156 coordinates ATP.

This sequence belongs to the shikimate kinase family. As to quaternary structure, monomer. Mg(2+) is required as a cofactor.

The protein resides in the cytoplasm. The enzyme catalyses shikimate + ATP = 3-phosphoshikimate + ADP + H(+). It functions in the pathway metabolic intermediate biosynthesis; chorismate biosynthesis; chorismate from D-erythrose 4-phosphate and phosphoenolpyruvate: step 5/7. Catalyzes the specific phosphorylation of the 3-hydroxyl group of shikimic acid using ATP as a cosubstrate. This Aliivibrio salmonicida (strain LFI1238) (Vibrio salmonicida (strain LFI1238)) protein is Shikimate kinase.